The primary structure comprises 239 residues: Serine protease SplF (239 aa).

The signal sequence occupies residues 1-36; it reads MNKNIIIKSIAALTILTSITGVGTTVVDGIQQTAKA. Catalysis depends on charge relay system residues His-75, Asp-114, and Ser-192.

This sequence belongs to the peptidase S1B family.

Its subcellular location is the secreted. This is Serine protease SplF (splF) from Staphylococcus aureus (strain MSSA476).